The chain runs to 1034 residues: Isoleucine--tRNA ligase (1034 aa).

The short motif at Pro-46–Thr-56 is the 'HIGH' region element. The 'KMSKS' region signature appears at Lys-598 to Ser-602. Lys-601 is a binding site for ATP.

It belongs to the class-I aminoacyl-tRNA synthetase family. IleS type 2 subfamily. As to quaternary structure, monomer. Requires Zn(2+) as cofactor.

The protein resides in the cytoplasm. It catalyses the reaction tRNA(Ile) + L-isoleucine + ATP = L-isoleucyl-tRNA(Ile) + AMP + diphosphate. In terms of biological role, catalyzes the attachment of isoleucine to tRNA(Ile). As IleRS can inadvertently accommodate and process structurally similar amino acids such as valine, to avoid such errors it has two additional distinct tRNA(Ile)-dependent editing activities. One activity is designated as 'pretransfer' editing and involves the hydrolysis of activated Val-AMP. The other activity is designated 'posttransfer' editing and involves deacylation of mischarged Val-tRNA(Ile). This Methanococcus maripaludis (strain DSM 14266 / JCM 13030 / NBRC 101832 / S2 / LL) protein is Isoleucine--tRNA ligase.